The primary structure comprises 73 residues: Defensin-like protein 6 (73 aa).

An N-terminal signal peptide occupies residues 1-26; it reads MENKFFAAFFLLLVLFSSQEIIGGEG. Intrachain disulfides connect Cys29-Cys73, Cys40-Cys60, Cys46-Cys67, and Cys50-Cys69.

Belongs to the DEFL family.

The protein resides in the secreted. Confers broad-spectrum resistance to pathogens. The sequence is that of Defensin-like protein 6 (PDF2.5) from Arabidopsis thaliana (Mouse-ear cress).